Reading from the N-terminus, the 512-residue chain is Lysine--tRNA ligase (512 aa).

Residues E408 and E415 each contribute to the Mg(2+) site.

This sequence belongs to the class-II aminoacyl-tRNA synthetase family. As to quaternary structure, homodimer. Requires Mg(2+) as cofactor.

It is found in the cytoplasm. It catalyses the reaction tRNA(Lys) + L-lysine + ATP = L-lysyl-tRNA(Lys) + AMP + diphosphate. The sequence is that of Lysine--tRNA ligase from Prochlorococcus marinus (strain MIT 9215).